The primary structure comprises 431 residues: UDP-N-acetylglucosamine 1-carboxyvinyltransferase (431 aa).

Residue 25–26 (KN) participates in phosphoenolpyruvate binding. A UDP-N-acetyl-alpha-D-glucosamine-binding site is contributed by arginine 101. Cysteine 125 acts as the Proton donor in catalysis. Cysteine 125 carries the 2-(S-cysteinyl)pyruvic acid O-phosphothioketal modification. UDP-N-acetyl-alpha-D-glucosamine-binding residues include aspartate 317 and isoleucine 339.

The protein belongs to the EPSP synthase family. MurA subfamily.

It localises to the cytoplasm. It carries out the reaction phosphoenolpyruvate + UDP-N-acetyl-alpha-D-glucosamine = UDP-N-acetyl-3-O-(1-carboxyvinyl)-alpha-D-glucosamine + phosphate. It participates in cell wall biogenesis; peptidoglycan biosynthesis. Cell wall formation. Adds enolpyruvyl to UDP-N-acetylglucosamine. This chain is UDP-N-acetylglucosamine 1-carboxyvinyltransferase, found in Thermobifida fusca (strain YX).